A 234-amino-acid polypeptide reads, in one-letter code: 2-phospho-L-lactate guanylyltransferase (234 aa).

Belongs to the CofC family. Homodimer.

The enzyme catalyses (2S)-2-phospholactate + GTP + H(+) = (2S)-lactyl-2-diphospho-5'-guanosine + diphosphate. Its pathway is cofactor biosynthesis; coenzyme F420 biosynthesis. Guanylyltransferase that catalyzes the activation of (2S)-2-phospholactate (2-PL) as (2S)-lactyl-2-diphospho-5'-guanosine, via the condensation of 2-PL with GTP. It is involved in the biosynthesis of coenzyme F420, a hydride carrier cofactor. This Methanobrevibacter ruminantium (strain ATCC 35063 / DSM 1093 / JCM 13430 / OCM 146 / M1) (Methanobacterium ruminantium) protein is 2-phospho-L-lactate guanylyltransferase.